The following is a 354-amino-acid chain: MTIDAALADKIRRTPKAELHVHIEGTLEPERIFRLAQRNNVKLAYPDVEALRAAYAFTDLQSFLDIYYAGASVLLTEEDFFDMTMDYVKRAAADNVRHAEIFFDPQTHTARGVPMGTVIDGIADALAQARTEYDFSSSMILCFLRHLSEEDALATLEAALPYRDRFVGVGLDSSERGNPPEKFARVFARAKELGLHLVAHAGEEGPPQYVTDALDILKVERIDHGVRAIEDEALVQRLARERVALTVCPLSNQKLMVHPDLRDHPMKRLLDAGVAVTLHSDDPAYFGGYMNANWEASFDALPLDAADAHKLARNSFEAAFLPDVQKAEFLAEVDHFWSATPASPPATANVTTTT.

H20, H22, and H200 together coordinate Zn(2+). E203 acts as the Proton donor in catalysis. Residue D281 coordinates Zn(2+). Substrate is bound at residue D282.

The protein belongs to the metallo-dependent hydrolases superfamily. Adenosine and AMP deaminases family. Adenine deaminase type 2 subfamily. The cofactor is Zn(2+).

The catalysed reaction is adenine + H2O + H(+) = hypoxanthine + NH4(+). Catalyzes the hydrolytic deamination of adenine to hypoxanthine. Plays an important role in the purine salvage pathway and in nitrogen catabolism. In Cupriavidus metallidurans (strain ATCC 43123 / DSM 2839 / NBRC 102507 / CH34) (Ralstonia metallidurans), this protein is Adenine deaminase.